The sequence spans 141 residues: Period circadian protein (141 aa).

The tract at residues Glu1–Lys141 is disordered. Positions His11–Val23 are enriched in polar residues. Gly residues predominate over residues Gly29 to Thr68. 19 tandem repeats follow at residues Gly30–Thr31, Gly33–Thr34, Gly35–Thr36, Gly37–Thr38, Gly39–Thr40, Gly41–Thr42, Gly43–Thr44, Gly45–Thr46, Gly47–Thr48, Gly49–Thr50, Gly51–Thr52, Gly53–Thr54, Gly55–Thr56, Gly57–Thr58, Gly59–Thr60, Gly61–Thr62, Gly63–Thr64, Gly65–Thr66, and Gly67–Thr68. The 32 X 2 AA approximate tandem repeats of G-T stretch occupies residues Gly30–Thr94. A 20; approximate repeat occupies Ala69–Ser70. Residues Ala69–Ala85 show a composition bias toward low complexity. Repeat unit 21 spans residues Gly71–Thr72. One copy of the 22; approximate repeat lies at Ala73–Thr74. Copy 23 of the repeat occupies Gly75–Thr76. Residues Ala77–Ser78 form a 24; approximate repeat. Copy 25 of the repeat occupies Gly79–Thr80. The stretch at Ala81 to Thr82 is one 26; approximate repeat. Copy 27 of the repeat occupies Gly83–Thr84. The 28; approximate repeat unit spans residues Ala85–Asn86. 2 tandem repeats follow at residues Gly87–Thr88 and Gly89–Thr90. The stretch at Gly91–Lys92 is one 31; approximate repeat. Copy 32 of the repeat occupies Gly93–Thr94. A compositionally biased stretch (gly residues) spans Ser101–Thr113. The span at Gly114–Thr129 shows a compositional bias: low complexity. Polar residues predominate over residues Pro130–Lys141.

As to quaternary structure, forms a heterodimer with timeless (TIM); the complex then translocates into the nucleus. In terms of processing, phosphorylated with a circadian rhythmicity, probably by the double-time protein (dbt). Phosphorylation could be implicated in the stability of per monomer and in the formation of heterodimer per-tim.

The protein localises to the nucleus. It localises to the cytoplasm. The protein resides in the perinuclear region. Essential for biological clock functions. Determines the period length of circadian and ultradian rhythms; an increase in PER dosage leads to shortened circadian rhythms and a decrease leads to lengthened circadian rhythms. Essential for the circadian rhythmicity of locomotor activity, eclosion behavior, and for the rhythmic component of the male courtship song that originates in the thoracic nervous system. The biological cycle depends on the rhythmic formation and nuclear localization of the TIM-PER complex. Light induces the degradation of TIM, which promotes elimination of PER. Nuclear activity of the heterodimer coordinatively regulates PER and TIM transcription through a negative feedback loop. Behaves as a negative element in circadian transcriptional loop. Does not appear to bind DNA, suggesting indirect transcriptional inhibition. This is Period circadian protein (per) from Drosophila serrata (Fruit fly).